Reading from the N-terminus, the 89-residue chain is Small ribosomal subunit protein uS15 (89 aa).

The protein belongs to the universal ribosomal protein uS15 family. Part of the 30S ribosomal subunit. Forms a bridge to the 50S subunit in the 70S ribosome, contacting the 23S rRNA.

In terms of biological role, one of the primary rRNA binding proteins, it binds directly to 16S rRNA where it helps nucleate assembly of the platform of the 30S subunit by binding and bridging several RNA helices of the 16S rRNA. Its function is as follows. Forms an intersubunit bridge (bridge B4) with the 23S rRNA of the 50S subunit in the ribosome. The protein is Small ribosomal subunit protein uS15 of Solibacter usitatus (strain Ellin6076).